A 310-amino-acid polypeptide reads, in one-letter code: tRNA-cytidine(32) 2-sulfurtransferase (310 aa).

A PP-loop motif motif is present at residues 44–49; it reads SGGKDS. Positions 119, 122, and 210 each coordinate [4Fe-4S] cluster.

The protein belongs to the TtcA family. In terms of assembly, homodimer. It depends on Mg(2+) as a cofactor. Requires [4Fe-4S] cluster as cofactor.

Its subcellular location is the cytoplasm. It carries out the reaction cytidine(32) in tRNA + S-sulfanyl-L-cysteinyl-[cysteine desulfurase] + AH2 + ATP = 2-thiocytidine(32) in tRNA + L-cysteinyl-[cysteine desulfurase] + A + AMP + diphosphate + H(+). Its pathway is tRNA modification. Catalyzes the ATP-dependent 2-thiolation of cytidine in position 32 of tRNA, to form 2-thiocytidine (s(2)C32). The sulfur atoms are provided by the cysteine/cysteine desulfurase (IscS) system. The sequence is that of tRNA-cytidine(32) 2-sulfurtransferase from Saccharophagus degradans (strain 2-40 / ATCC 43961 / DSM 17024).